Here is a 469-residue protein sequence, read N- to C-terminus: Diaminobutyrate--2-oxoglutarate transaminase (469 aa).

Lys-290 bears the N6-(pyridoxal phosphate)lysine mark.

The protein belongs to the class-III pyridoxal-phosphate-dependent aminotransferase family. The cofactor is pyridoxal 5'-phosphate.

Its subcellular location is the cytoplasm. It catalyses the reaction L-2,4-diaminobutanoate + 2-oxoglutarate = L-aspartate 4-semialdehyde + L-glutamate. In terms of biological role, involved in the degradation of ectoine, which allows H.elongata to utilize ectoine as both a carbon and a nitrogen source for growth. Probably catalyzes the conversion of L-2,4-diaminobutyrate (DABA) to L-aspartate beta-semialdehyde (ASA) by transamination with 2-oxoglutarate. The protein is Diaminobutyrate--2-oxoglutarate transaminase of Halomonas elongata (strain ATCC 33173 / DSM 2581 / NBRC 15536 / NCIMB 2198 / 1H9).